Consider the following 90-residue polypeptide: Cell division topological specificity factor (90 aa).

The tract at residues 1-21 (MAGFWSKLFSSEEKPSSAQTA) is disordered. The span at 10–21 (SSEEKPSSAQTA) shows a compositional bias: basic and acidic residues.

Belongs to the MinE family.

Prevents the cell division inhibition by proteins MinC and MinD at internal division sites while permitting inhibition at polar sites. This ensures cell division at the proper site by restricting the formation of a division septum at the midpoint of the long axis of the cell. In Acinetobacter baumannii (strain AB307-0294), this protein is Cell division topological specificity factor.